The primary structure comprises 241 residues: MASNGESKHSEVGHKSLLQSDALYQYILETSVYPREPEAMKELREVTAKHPWNLMTTSADEGQFLNMLLKLINAKNTMEIGVYTGYSLLATALALPDDGKILAMDINRENYEIGLPIIEKAGVGHKIDFREGPALPVLDHMLEDGKYHGTFDFVFVDADKDNYINYHKRLIDLVKIGGLIGYDNTLWNGSVAQPADAPMRKYVRYYRDFVIELNKALAADPRIEICMLPVGDGVTLCRRIS.

Position 1 is a blocked amino end (Met) (Met1). Lys15 contacts substrate. S-adenosyl-L-methionine-binding positions include Thr57, Glu79, 81-82, Ser87, Asp105, and Ala134; that span reads GV. A substrate-binding site is contributed by Asp157. Residue Asp157 participates in a divalent metal cation binding. An S-adenosyl-L-methionine-binding site is contributed by Asp159. Residues Asp183 and Asn184 each contribute to the a divalent metal cation site. Asn188 lines the substrate pocket.

Belongs to the class I-like SAM-binding methyltransferase superfamily. Cation-dependent O-methyltransferase family. CCoAMT subfamily. In terms of assembly, homodimer. The cofactor is a divalent metal cation. As to expression, roots and leaves.

It catalyses the reaction (E)-caffeoyl-CoA + S-adenosyl-L-methionine = (E)-feruloyl-CoA + S-adenosyl-L-homocysteine + H(+). Its pathway is aromatic compound metabolism; phenylpropanoid biosynthesis. Methylates caffeoyl-CoA to feruloyl-CoA and 5-hydroxyferuloyl-CoA to sinapoyl-CoA. Plays a role in the synthesis of feruloylated polysaccharides. Involved in the reinforcement of the plant cell wall. Also involved in the responding to wounding or pathogen challenge by the increased formation of cell wall-bound ferulic acid polymers. The protein is Caffeoyl-CoA O-methyltransferase of Petroselinum crispum (Parsley).